The sequence spans 227 residues: uncharacterized protein (227 aa).

It is found in the virion. This is an uncharacterized protein from Acanthamoeba polyphaga (Amoeba).